We begin with the raw amino-acid sequence, 275 residues long: Bis(5'-nucleosyl)-tetraphosphatase, symmetrical (275 aa).

This sequence belongs to the Ap4A hydrolase family.

The enzyme catalyses P(1),P(4)-bis(5'-adenosyl) tetraphosphate + H2O = 2 ADP + 2 H(+). Hydrolyzes diadenosine 5',5'''-P1,P4-tetraphosphate to yield ADP. The sequence is that of Bis(5'-nucleosyl)-tetraphosphatase, symmetrical from Haemophilus influenzae (strain PittGG).